The chain runs to 849 residues: G-type lectin S-receptor-like serine/threonine-protein kinase B120 (849 aa).

Positions 1-25 are cleaved as a signal peptide; that stretch reads MRFFRKTSLYLSLFLYFFLYESSMA. One can recognise a Bulb-type lectin domain in the interval 26–153; it reads ANTIRRGESL…DTDRPIWESF (128 aa). At 26–438 the chain is on the extracellular side; it reads ANTIRRGESL…SEVGENRKTK (413 aa). N-linked (GlcNAc...) asparagine glycans are attached at residues Asn110, Asn191, Asn210, Asn230, Asn273, and Asn282. Residues 295 to 332 enclose the EGF-like; atypical domain; the sequence is PDSECDQYNRCGKFGICDMKGSNGICSCIHGYEQVSVG. 2 disulfide bridges follow: Cys299-Cys311 and Cys305-Cys320. N-linked (GlcNAc...) asparagine glycosylation is found at Asn333, Asn349, and Asn388. In terms of domain architecture, PAN spans 346-427; that stretch reads CERNISVGED…GGSSLHIRLA (82 aa). 2 cysteine pairs are disulfide-bonded: Cys381–Cys402 and Cys385–Cys391. A helical membrane pass occupies residues 439–459; sequence IAVIVAVLVGVILIGIFALLL. The Cytoplasmic segment spans residues 460–849; it reads WRFKRKKDVS…EITSTVVLGR (390 aa). Positions 529–814 constitute a Protein kinase domain; the sequence is FCKENELGRG…TLAAPRQPTF (286 aa). ATP is bound by residues 535 to 543 and Lys557; that span reads LGRGGFGPV. Phosphoserine is present on Ser563. The caM-binding stretch occupies residues 618–635; sequence TKQALIDWKLRFSIIEGI. Asp654 acts as the Proton acceptor in catalysis. Ser658 and Ser671 each carry phosphoserine. Thr688 is subject to Phosphothreonine. 2 positions are modified to phosphoserine: Ser732 and Ser837. Thr844 bears the Phosphothreonine mark.

It belongs to the protein kinase superfamily. Ser/Thr protein kinase family.

The protein localises to the cell membrane. The catalysed reaction is L-seryl-[protein] + ATP = O-phospho-L-seryl-[protein] + ADP + H(+). The enzyme catalyses L-threonyl-[protein] + ATP = O-phospho-L-threonyl-[protein] + ADP + H(+). This is G-type lectin S-receptor-like serine/threonine-protein kinase B120 (B120) from Arabidopsis thaliana (Mouse-ear cress).